We begin with the raw amino-acid sequence, 305 residues long: UDP-N-acetylenolpyruvoylglucosamine reductase 2 (305 aa).

The 165-residue stretch at 33 to 197 folds into the FAD-binding PCMH-type domain; that stretch reads VGGKADVFVA…LEARFELEEG (165 aa). The active site involves arginine 176. Serine 226 functions as the Proton donor in the catalytic mechanism. Glutamate 296 is an active-site residue.

It belongs to the MurB family. The cofactor is FAD.

The protein localises to the cytoplasm. The enzyme catalyses UDP-N-acetyl-alpha-D-muramate + NADP(+) = UDP-N-acetyl-3-O-(1-carboxyvinyl)-alpha-D-glucosamine + NADPH + H(+). The protein operates within cell wall biogenesis; peptidoglycan biosynthesis. Functionally, cell wall formation. In Bacillus cereus (strain ATCC 14579 / DSM 31 / CCUG 7414 / JCM 2152 / NBRC 15305 / NCIMB 9373 / NCTC 2599 / NRRL B-3711), this protein is UDP-N-acetylenolpyruvoylglucosamine reductase 2 (murB2).